A 231-amino-acid chain; its full sequence is Probable pseudouridine-5'-phosphatase (231 aa).

Catalysis depends on D15, which acts as the Nucleophile. Mg(2+) is bound by residues D15 and D17. D17 acts as the Proton donor in catalysis.

Belongs to the HAD-like hydrolase superfamily. CbbY/CbbZ/Gph/YieH family. The cofactor is Mg(2+).

The catalysed reaction is psi-UMP + H2O = pseudouridine + phosphate. Functionally, dephosphorylates pseudouridine 5'-phosphate, a potential intermediate in rRNA degradation. The polypeptide is Probable pseudouridine-5'-phosphatase (Gs1l) (Drosophila melanogaster (Fruit fly)).